Consider the following 413-residue polypeptide: Mitochondrial carrier protein MTM1 (413 aa).

3 Solcar repeats span residues Ile59 to Arg193, Met205 to Arg305, and Gly318 to Val406. The next 6 helical transmembrane spans lie at Val65–Val85, Asn170–Phe190, Ala204–Tyr226, Gln284–Lys304, Leu316–Ala336, and Leu378–Phe399.

This sequence belongs to the mitochondrial carrier (TC 2.A.29) family. Ubiquitous.

Its subcellular location is the mitochondrion inner membrane. Functionally, involved in the mitochondrial activation of MSD1 by specifically facilitating insertion of the essential manganese cofactor. Has the ability to activate iron regulon in an iron-dependent manner. In Arabidopsis thaliana (Mouse-ear cress), this protein is Mitochondrial carrier protein MTM1 (MTM1).